The primary structure comprises 412 residues: Diphosphomevalonate decarboxylase MVD1, peroxisomal (412 aa).

(R)-5-diphosphomevalonate is bound at residue tyrosine 23 to lysine 26. The Peroxisomal targeting signal PTS2 signature appears at serine 40–leucine 48. (R)-5-diphosphomevalonate contacts are provided by residues arginine 78, serine 161–arginine 166, and threonine 217.

It belongs to the diphosphomevalonate decarboxylase family. In terms of assembly, homodimer.

The protein localises to the peroxisome. The catalysed reaction is (R)-5-diphosphomevalonate + ATP = isopentenyl diphosphate + ADP + phosphate + CO2. The protein operates within isoprenoid biosynthesis; isopentenyl diphosphate biosynthesis via mevalonate pathway; isopentenyl diphosphate from (R)-mevalonate: step 3/3. Functionally, performs the first committed step in the biosynthesis of isoprene-containing compounds such as sterols and terpenoids. Is specific for (R)-5-diphosphomevalonate (MVAPP). The catalytic efficiency with (R)-5-phosphomevalonate (MVAP) as substrate is 10000-fold lower than for MVAPP. Can complement a yeast mutant defective in MVD activity. The protein is Diphosphomevalonate decarboxylase MVD1, peroxisomal of Arabidopsis thaliana (Mouse-ear cress).